The sequence spans 140 residues: Sec-independent protein translocase protein TatB (140 aa).

Residues 1-21 (MFDIGFSELLLIAVVALVVLG) traverse the membrane as a helical segment. The interval 119–140 (VHVTSPPPSTSTHGNNGQEKSQ) is disordered. Residues 128 to 140 (TSTHGNNGQEKSQ) are compositionally biased toward polar residues.

It belongs to the TatB family. In terms of assembly, the Tat system comprises two distinct complexes: a TatABC complex, containing multiple copies of TatA, TatB and TatC subunits, and a separate TatA complex, containing only TatA subunits. Substrates initially bind to the TatABC complex, which probably triggers association of the separate TatA complex to form the active translocon.

The protein localises to the cell inner membrane. Functionally, part of the twin-arginine translocation (Tat) system that transports large folded proteins containing a characteristic twin-arginine motif in their signal peptide across membranes. Together with TatC, TatB is part of a receptor directly interacting with Tat signal peptides. TatB may form an oligomeric binding site that transiently accommodates folded Tat precursor proteins before their translocation. In Xylella fastidiosa (strain 9a5c), this protein is Sec-independent protein translocase protein TatB.